Here is a 356-residue protein sequence, read N- to C-terminus: Heat-inducible transcription repressor HrcA (356 aa).

The protein belongs to the HrcA family.

Functionally, negative regulator of class I heat shock genes (grpE-dnaK-dnaJ and groELS operons). Prevents heat-shock induction of these operons. This chain is Heat-inducible transcription repressor HrcA, found in Chlorobaculum parvum (strain DSM 263 / NCIMB 8327) (Chlorobium vibrioforme subsp. thiosulfatophilum).